Here is a 167-residue protein sequence, read N- to C-terminus: Phosphopantetheine adenylyltransferase (167 aa).

Residue Ser9 coordinates substrate. Residues 9–10 (SF) and His17 each bind ATP. Substrate contacts are provided by Lys41, Val78, and Arg92. ATP contacts are provided by residues 93-95 (GLR), Glu103, and 128-134 (SRPITAT).

The protein belongs to the bacterial CoaD family. Homohexamer. Mg(2+) is required as a cofactor.

Its subcellular location is the cytoplasm. The enzyme catalyses (R)-4'-phosphopantetheine + ATP + H(+) = 3'-dephospho-CoA + diphosphate. It functions in the pathway cofactor biosynthesis; coenzyme A biosynthesis; CoA from (R)-pantothenate: step 4/5. Functionally, reversibly transfers an adenylyl group from ATP to 4'-phosphopantetheine, yielding dephospho-CoA (dPCoA) and pyrophosphate. The protein is Phosphopantetheine adenylyltransferase of Rhizobium rhizogenes (strain K84 / ATCC BAA-868) (Agrobacterium radiobacter).